We begin with the raw amino-acid sequence, 239 residues long: Leucyl/phenylalanyl-tRNA--protein transferase (239 aa).

This sequence belongs to the L/F-transferase family.

It is found in the cytoplasm. It carries out the reaction N-terminal L-lysyl-[protein] + L-leucyl-tRNA(Leu) = N-terminal L-leucyl-L-lysyl-[protein] + tRNA(Leu) + H(+). It catalyses the reaction N-terminal L-arginyl-[protein] + L-leucyl-tRNA(Leu) = N-terminal L-leucyl-L-arginyl-[protein] + tRNA(Leu) + H(+). The catalysed reaction is L-phenylalanyl-tRNA(Phe) + an N-terminal L-alpha-aminoacyl-[protein] = an N-terminal L-phenylalanyl-L-alpha-aminoacyl-[protein] + tRNA(Phe). Its function is as follows. Functions in the N-end rule pathway of protein degradation where it conjugates Leu, Phe and, less efficiently, Met from aminoacyl-tRNAs to the N-termini of proteins containing an N-terminal arginine or lysine. This is Leucyl/phenylalanyl-tRNA--protein transferase from Aliivibrio fischeri (strain MJ11) (Vibrio fischeri).